The chain runs to 274 residues: Glucosamine-6-phosphate deaminase (274 aa).

D71 serves as the catalytic Proton acceptor; for enolization step. D140 functions as the For ring-opening step in the catalytic mechanism. H142 acts as the Proton acceptor; for ring-opening step in catalysis. E147 functions as the For ring-opening step in the catalytic mechanism.

Belongs to the glucosamine/galactosamine-6-phosphate isomerase family. NagB subfamily.

The enzyme catalyses alpha-D-glucosamine 6-phosphate + H2O = beta-D-fructose 6-phosphate + NH4(+). The protein operates within amino-sugar metabolism; N-acetylneuraminate degradation; D-fructose 6-phosphate from N-acetylneuraminate: step 5/5. Functionally, catalyzes the reversible isomerization-deamination of glucosamine 6-phosphate (GlcN6P) to form fructose 6-phosphate (Fru6P) and ammonium ion. This chain is Glucosamine-6-phosphate deaminase, found in Fusobacterium nucleatum subsp. nucleatum (strain ATCC 25586 / DSM 15643 / BCRC 10681 / CIP 101130 / JCM 8532 / KCTC 2640 / LMG 13131 / VPI 4355).